The chain runs to 474 residues: Methylenetetrahydrofolate--tRNA-(uracil-5-)-methyltransferase TrmFO (474 aa).

15-20 serves as a coordination point for FAD; it reads GAGLAG. The tract at residues 453 to 474 is disordered; the sequence is PLLPTAPDTTGAAGEETTQAES.

It belongs to the MnmG family. TrmFO subfamily. The cofactor is FAD.

It is found in the cytoplasm. The enzyme catalyses uridine(54) in tRNA + (6R)-5,10-methylene-5,6,7,8-tetrahydrofolate + NADH + H(+) = 5-methyluridine(54) in tRNA + (6S)-5,6,7,8-tetrahydrofolate + NAD(+). The catalysed reaction is uridine(54) in tRNA + (6R)-5,10-methylene-5,6,7,8-tetrahydrofolate + NADPH + H(+) = 5-methyluridine(54) in tRNA + (6S)-5,6,7,8-tetrahydrofolate + NADP(+). Catalyzes the folate-dependent formation of 5-methyl-uridine at position 54 (M-5-U54) in all tRNAs. This is Methylenetetrahydrofolate--tRNA-(uracil-5-)-methyltransferase TrmFO from Nitratidesulfovibrio vulgaris (strain ATCC 29579 / DSM 644 / CCUG 34227 / NCIMB 8303 / VKM B-1760 / Hildenborough) (Desulfovibrio vulgaris).